A 279-amino-acid polypeptide reads, in one-letter code: 4-diphosphocytidyl-2-C-methyl-D-erythritol kinase (279 aa).

Lysine 10 is a catalytic residue. Residue 91–101 (PVASGIGGGSA) participates in ATP binding. Residue aspartate 130 is part of the active site.

This sequence belongs to the GHMP kinase family. IspE subfamily.

The enzyme catalyses 4-CDP-2-C-methyl-D-erythritol + ATP = 4-CDP-2-C-methyl-D-erythritol 2-phosphate + ADP + H(+). It participates in isoprenoid biosynthesis; isopentenyl diphosphate biosynthesis via DXP pathway; isopentenyl diphosphate from 1-deoxy-D-xylulose 5-phosphate: step 3/6. Catalyzes the phosphorylation of the position 2 hydroxy group of 4-diphosphocytidyl-2C-methyl-D-erythritol. The protein is 4-diphosphocytidyl-2-C-methyl-D-erythritol kinase of Ruegeria pomeroyi (strain ATCC 700808 / DSM 15171 / DSS-3) (Silicibacter pomeroyi).